A 236-amino-acid polypeptide reads, in one-letter code: Transcription repressor MYB6 (236 aa).

HTH myb-type domains follow at residues K9–L61 and R62–L116. DNA-binding regions (H-T-H motif) lie at residues W37–L61 and W89–I112. The tract at residues P159–R181 is disordered. The span at E162–T175 shows a compositional bias: polar residues.

As to quaternary structure, interacts with BHLH012/MYC1 and BHLH042/TT8. As to expression, expressed in roots, stems, flower buds, and siliques.

It localises to the nucleus. The chain is Transcription repressor MYB6 (MYB6) from Arabidopsis thaliana (Mouse-ear cress).